A 480-amino-acid chain; its full sequence is Chromosomal replication initiator protein DnaA (480 aa).

The segment at 1-73 (MNQDFWPFCL…GELGEEFHGQ (73 aa)) is domain I, interacts with DnaA modulators. Positions 73–143 (QPIQLELQLP…SANELAYDKT (71 aa)) are domain II. The interval 144–360 (RLNADFTFDT…GALNKVVAYA (217 aa)) is domain III, AAA+ region. ATP-binding residues include glycine 188, glycine 190, lysine 191, and threonine 192. The interval 361 to 480 (RFHGRGISLE…VHVLTQVLRG (120 aa)) is domain IV, binds dsDNA.

This sequence belongs to the DnaA family. As to quaternary structure, oligomerizes as a right-handed, spiral filament on DNA at oriC.

It is found in the cytoplasm. In terms of biological role, plays an essential role in the initiation and regulation of chromosomal replication. ATP-DnaA binds to the origin of replication (oriC) to initiate formation of the DNA replication initiation complex once per cell cycle. Binds the DnaA box (a 9 base pair repeat at the origin) and separates the double-stranded (ds)DNA. Forms a right-handed helical filament on oriC DNA; dsDNA binds to the exterior of the filament while single-stranded (ss)DNA is stabiized in the filament's interior. The ATP-DnaA-oriC complex binds and stabilizes one strand of the AT-rich DNA unwinding element (DUE), permitting loading of DNA polymerase. After initiation quickly degrades to an ADP-DnaA complex that is not apt for DNA replication. Binds acidic phospholipids. The polypeptide is Chromosomal replication initiator protein DnaA (Azoarcus sp. (strain BH72)).